The primary structure comprises 345 residues: NADH-ubiquinone oxidoreductase chain 2 (345 aa).

10 helical membrane-spanning segments follow: residues 1–21 (MNPL…ILTT), 26–46 (WVSA…IISM), 60–80 (FLIQ…NAHL), 96–115 (IALT…HFWL), 122–144 (VPIL…LLIM), 148–170 (LIPT…LGGL), 201–223 (TLLN…HLTM), 242–262 (SLFL…GFIP), 274–294 (NLTP…MFYL), and 323–343 (TSTL…TPTL).

It belongs to the complex I subunit 2 family.

It localises to the mitochondrion inner membrane. It carries out the reaction a ubiquinone + NADH + 5 H(+)(in) = a ubiquinol + NAD(+) + 4 H(+)(out). Its function is as follows. Core subunit of the mitochondrial membrane respiratory chain NADH dehydrogenase (Complex I) that is believed to belong to the minimal assembly required for catalysis. Complex I functions in the transfer of electrons from NADH to the respiratory chain. The immediate electron acceptor for the enzyme is believed to be ubiquinone. The protein is NADH-ubiquinone oxidoreductase chain 2 (MT-ND2) of Varanus nebulosus (Clouded monitor).